An 85-amino-acid polypeptide reads, in one-letter code: Dual endothelin-1/VEGF signal peptide receptor (85 aa).

Over 1 to 18 (MTMFKGSNEMKSRWNWGS) the chain is Extracellular. Residues 19-37 (ITCIICFTCVGSQLSMSSS) form a helical membrane-spanning segment. Over 38 to 85 (KASNFSGPLQLYQRELEIFIVLTDVPNYRLIKENSHLHTTIVDQGRTV) the chain is Cytoplasmic.

In terms of processing, N-glycosylated. As to expression, expressed in kidney. Expressed in endothelial cells.

It localises to the cell membrane. Dual receptor for both endothelin-1 and the signal sequence of vascular endothelial growth factor A. Does not act as a receptor for angiotensin-2. Does not bind the VEGFA mature protein. May play a role in angiogenesis with a significant role in cardiovascular and neural development. The polypeptide is Dual endothelin-1/VEGF signal peptide receptor (Homo sapiens (Human)).